Reading from the N-terminus, the 510-residue chain is Ribonuclease Y (510 aa).

The chain crosses the membrane as a helical span at residues 1–21 (MLIYILSGLGVLVGALLGYVV). The KH domain occupies 200-260 (TVSTIMLPND…LRREIAKRTI (61 aa)). The HD domain occupies 326–419 (VLNHSIEVAL…VAAADALSAA (94 aa)).

The protein belongs to the RNase Y family.

The protein resides in the cell membrane. Its function is as follows. Endoribonuclease that initiates mRNA decay. The chain is Ribonuclease Y from Thermosipho melanesiensis (strain DSM 12029 / CIP 104789 / BI429).